Here is a 379-residue protein sequence, read N- to C-terminus: Ribosomal RNA large subunit methyltransferase G (379 aa).

Belongs to the methyltransferase superfamily. RlmG family.

The protein resides in the cytoplasm. The enzyme catalyses guanosine(1835) in 23S rRNA + S-adenosyl-L-methionine = N(2)-methylguanosine(1835) in 23S rRNA + S-adenosyl-L-homocysteine + H(+). In terms of biological role, specifically methylates the guanine in position 1835 (m2G1835) of 23S rRNA. The chain is Ribosomal RNA large subunit methyltransferase G from Serratia proteamaculans (strain 568).